We begin with the raw amino-acid sequence, 1138 residues long: Nuclear pore complex-interacting protein family member B4 (1138 aa).

A helical transmembrane segment spans residues 63–87 (VIIAFPTSYKVVITLWIVYLWVSLL). 3 disordered regions span residues 241–263 (NRMG…SLSL), 291–620 (TPLP…NIKT), and 873–1138 (ERLR…RRLS). Over residues 252 to 262 (QQHSITDNSLS) the composition is skewed to polar residues. Pro residues predominate over residues 349-359 (PLPPSALPSAP). Basic and acidic residues-rich tracts occupy residues 406–416 (DNIKTPAERLR), 448–458 (DNIKTPAERLR), 490–500 (DNIKTPAERLR), 532–542 (DNIKTPAERLR), 574–584 (DNIKTPAERLR), 908–918 (DNIKTPAERLR), 950–960 (DNIKTPAERLR), and 992–1002 (DNIKTPAERLR).

Belongs to the NPIP family.

The protein localises to the membrane. The chain is Nuclear pore complex-interacting protein family member B4 (NPIPB4) from Homo sapiens (Human).